Consider the following 157-residue polypeptide: MSSKKSAPGSANIAQNRQATHEYFIEERLEAGLVLEGWEVKSLRAGKAQLKESFVMLKNGEAWLFGAHFSPLPSASTHVQPDPTRSRKLLLHAEELSRLIGQVERKGYTLVPLSLYWKQGRAKLEIGLARGKKQHDKRAAEKERDWEREKQRVMRRG.

The interval 128–157 (LARGKKQHDKRAAEKERDWEREKQRVMRRG) is disordered. The segment covering 137-157 (KRAAEKERDWEREKQRVMRRG) has biased composition (basic and acidic residues).

It belongs to the SmpB family.

The protein localises to the cytoplasm. Its function is as follows. Required for rescue of stalled ribosomes mediated by trans-translation. Binds to transfer-messenger RNA (tmRNA), required for stable association of tmRNA with ribosomes. tmRNA and SmpB together mimic tRNA shape, replacing the anticodon stem-loop with SmpB. tmRNA is encoded by the ssrA gene; the 2 termini fold to resemble tRNA(Ala) and it encodes a 'tag peptide', a short internal open reading frame. During trans-translation Ala-aminoacylated tmRNA acts like a tRNA, entering the A-site of stalled ribosomes, displacing the stalled mRNA. The ribosome then switches to translate the ORF on the tmRNA; the nascent peptide is terminated with the 'tag peptide' encoded by the tmRNA and targeted for degradation. The ribosome is freed to recommence translation, which seems to be the essential function of trans-translation. The protein is SsrA-binding protein of Methylococcus capsulatus (strain ATCC 33009 / NCIMB 11132 / Bath).